Here is a 475-residue protein sequence, read N- to C-terminus: Methionine aminopeptidase 2-1 (475 aa).

Residues 1 to 12 are compositionally biased toward basic and acidic residues; sequence MGSKSPEGHRQT. The segment at 1–97 is disordered; the sequence is MGSKSPEGHR…LKQSSPPRVL (97 aa). Positions 44–57 are enriched in acidic residues; that stretch reads NLDDDNDDDGEANE. Basic residues predominate over residues 70–83; sequence KKKKRKRSKKKTKK. Residue His211 coordinates substrate. Asp232, Asp243, and His312 together coordinate a divalent metal cation. Residue His320 participates in substrate binding. A divalent metal cation is bound by residues Glu345 and Glu456.

Belongs to the peptidase M24A family. Methionine aminopeptidase eukaryotic type 2 subfamily. It depends on Co(2+) as a cofactor. The cofactor is Zn(2+). Mn(2+) is required as a cofactor. Requires Fe(2+) as cofactor.

It is found in the cytoplasm. The catalysed reaction is Release of N-terminal amino acids, preferentially methionine, from peptides and arylamides.. Functionally, cotranslationally removes the N-terminal methionine from nascent proteins. The N-terminal methionine is often cleaved when the second residue in the primary sequence is small and uncharged (Met-Ala-, Cys, Gly, Pro, Ser, Thr, or Val). The sequence is that of Methionine aminopeptidase 2-1 from Aspergillus niger (strain ATCC MYA-4892 / CBS 513.88 / FGSC A1513).